The sequence spans 330 residues: Serine/threonine-protein phosphatase beta isoform (330 aa).

Mn(2+)-binding residues include Asp63, His65, Asp91, and Asn123. The active-site Proton donor is the His124. Mn(2+) contacts are provided by His172 and His247. Over residues 308–319 (GMNSSRPTTPQR) the composition is skewed to polar residues. The interval 308 to 330 (GMNSSRPTTPQRSAPMLATNKKK) is disordered. Thr315 and Thr316 each carry phosphothreonine.

Belongs to the PPP phosphatase family. PP-1 subfamily. As to quaternary structure, interacts with Nop17l. Interacts with uri; uri inhibits flw phosphatase activity. It depends on Mn(2+) as a cofactor.

The enzyme catalyses O-phospho-L-seryl-[protein] + H2O = L-seryl-[protein] + phosphate. The catalysed reaction is O-phospho-L-threonyl-[protein] + H2O = L-threonyl-[protein] + phosphate. Functionally, required for cell adhesion in non-muscle tissues and in maintenance of muscle attachment. Vital for larval development. The sequence is that of Serine/threonine-protein phosphatase beta isoform (flw) from Drosophila melanogaster (Fruit fly).